The sequence spans 484 residues: Protein nucleotidyltransferase YdiU (484 aa).

The ATP site is built by glycine 87, glycine 89, arginine 90, lysine 110, aspartate 122, glycine 123, arginine 173, and arginine 180. The active-site Proton acceptor is aspartate 249. The Mg(2+) site is built by asparagine 250 and aspartate 259. Residue aspartate 259 participates in ATP binding. Residues 463–484 (EQEKYAELPPPSDRPYRTFCGT) form a disordered region.

This sequence belongs to the SELO family. The cofactor is Mg(2+). It depends on Mn(2+) as a cofactor.

It catalyses the reaction L-seryl-[protein] + ATP = 3-O-(5'-adenylyl)-L-seryl-[protein] + diphosphate. The enzyme catalyses L-threonyl-[protein] + ATP = 3-O-(5'-adenylyl)-L-threonyl-[protein] + diphosphate. It carries out the reaction L-tyrosyl-[protein] + ATP = O-(5'-adenylyl)-L-tyrosyl-[protein] + diphosphate. The catalysed reaction is L-histidyl-[protein] + UTP = N(tele)-(5'-uridylyl)-L-histidyl-[protein] + diphosphate. It catalyses the reaction L-seryl-[protein] + UTP = O-(5'-uridylyl)-L-seryl-[protein] + diphosphate. The enzyme catalyses L-tyrosyl-[protein] + UTP = O-(5'-uridylyl)-L-tyrosyl-[protein] + diphosphate. Functionally, nucleotidyltransferase involved in the post-translational modification of proteins. It can catalyze the addition of adenosine monophosphate (AMP) or uridine monophosphate (UMP) to a protein, resulting in modifications known as AMPylation and UMPylation. The chain is Protein nucleotidyltransferase YdiU from Geobacillus kaustophilus (strain HTA426).